The chain runs to 316 residues: HTH-type transcriptional regulator cbl (316 aa).

Residues 1–59 (MNFQQLKIIREAARQDYNLTEVANMLYTSQSGVSRHIRELEEELGIEIFIRRGKRLLGM) form the HTH lysR-type domain. A DNA-binding region (H-T-H motif) is located at residues 19–38 (LTEVANMLYTSQSGVSRHIR).

It belongs to the LysR transcriptional regulatory family.

In terms of biological role, may be an accessory regulatory protein within the cys regulon. The polypeptide is HTH-type transcriptional regulator cbl (cbl) (Klebsiella aerogenes (Enterobacter aerogenes)).